The following is a 571-amino-acid chain: Proline--tRNA ligase (571 aa).

Belongs to the class-II aminoacyl-tRNA synthetase family. ProS type 1 subfamily. In terms of assembly, homodimer.

It is found in the cytoplasm. The enzyme catalyses tRNA(Pro) + L-proline + ATP = L-prolyl-tRNA(Pro) + AMP + diphosphate. In terms of biological role, catalyzes the attachment of proline to tRNA(Pro) in a two-step reaction: proline is first activated by ATP to form Pro-AMP and then transferred to the acceptor end of tRNA(Pro). As ProRS can inadvertently accommodate and process non-cognate amino acids such as alanine and cysteine, to avoid such errors it has two additional distinct editing activities against alanine. One activity is designated as 'pretransfer' editing and involves the tRNA(Pro)-independent hydrolysis of activated Ala-AMP. The other activity is designated 'posttransfer' editing and involves deacylation of mischarged Ala-tRNA(Pro). The misacylated Cys-tRNA(Pro) is not edited by ProRS. In Shewanella baltica (strain OS185), this protein is Proline--tRNA ligase.